A 452-amino-acid polypeptide reads, in one-letter code: Molybdate-anion transporter (452 aa).

The next 12 helical transmembrane spans lie at 1-21, 45-65, 79-99, 130-150, 180-200, 201-221, 251-271, 281-301, 316-336, 346-366, 377-397, and 410-430; these read MLLTAYFVLVGLIALWAVLEF, YDFYRTYFPALAADWLQGPYL, IAIIYVCGFGASVFAGLVSAP, FVLITGRVLGGFSSSLLFSSF, NGGIAIAAGVIANACAEWLGL, GPASPSVLAVPLLVLSVALVI, VLLLGTIQALFESVVYIFIFL, TPLGIAFSSFMAASAAGSSLY, VLCLSILMVFFSLFMLTFSTA, LLAFLLIELACGLYFPAMGFL, IGVLNWFRVPLNLLAGLGLLV, and MFSLCAITMLLALLCVVSLFT.

The protein belongs to the major facilitator superfamily.

It is found in the cell membrane. Its function is as follows. Mediates high-affinity intracellular uptake of the rare oligo-element molybdenum. This Xenopus tropicalis (Western clawed frog) protein is Molybdate-anion transporter (mfsd5).